A 337-amino-acid chain; its full sequence is S-adenosylmethionine:tRNA ribosyltransferase-isomerase (337 aa).

Belongs to the QueA family. Monomer.

It is found in the cytoplasm. It catalyses the reaction 7-aminomethyl-7-carbaguanosine(34) in tRNA + S-adenosyl-L-methionine = epoxyqueuosine(34) in tRNA + adenine + L-methionine + 2 H(+). It functions in the pathway tRNA modification; tRNA-queuosine biosynthesis. In terms of biological role, transfers and isomerizes the ribose moiety from AdoMet to the 7-aminomethyl group of 7-deazaguanine (preQ1-tRNA) to give epoxyqueuosine (oQ-tRNA). This chain is S-adenosylmethionine:tRNA ribosyltransferase-isomerase, found in Legionella pneumophila (strain Lens).